The following is a 576-amino-acid chain: Mitogen-activated protein kinase 15 (576 aa).

The disordered stretch occupies residues 20 to 50 (RPSSSSSSNNHDQIQNPPTVSNPNDDEDLKK). Residues 28-42 (NNHDQIQNPPTVSNP) show a composition bias toward polar residues. The Protein kinase domain occupies 90–381 (YQIQEVVGKG…AEEALADPYF (292 aa)). ATP-binding positions include 96-104 (VGKGSYGVV) and lysine 119. The active-site Proton acceptor is the aspartate 216. Threonine 252 carries the post-translational modification Phosphothreonine. The TXY motif lies at 252–254 (TDY). Tyrosine 254 is subject to Phosphotyrosine. At threonine 257 the chain carries Phosphothreonine. A disordered region spans residues 458–535 (EENQGPGGRS…GGGYSARNLM (78 aa)). The span at 477 to 501 (LPRERVPASKNETVEERSNDIERRT) shows a compositional bias: basic and acidic residues. A compositionally biased stretch (polar residues) spans 504 to 520 (AVASTLDSPKASQQAEG).

It belongs to the protein kinase superfamily. CMGC Ser/Thr protein kinase family. MAP kinase subfamily. In terms of assembly, interacts with MKK7. Post-translationally, dually phosphorylated on Thr-252 and Tyr-254, which activates the enzyme.

It carries out the reaction L-seryl-[protein] + ATP = O-phospho-L-seryl-[protein] + ADP + H(+). The catalysed reaction is L-threonyl-[protein] + ATP = O-phospho-L-threonyl-[protein] + ADP + H(+). Activated by threonine and tyrosine phosphorylation. The sequence is that of Mitogen-activated protein kinase 15 (MPK15) from Arabidopsis thaliana (Mouse-ear cress).